The chain runs to 200 residues: Chromophore lyase CpcT/CpeT 2 (200 aa).

This sequence belongs to the CpcT/CpeT biliprotein lyase family.

Its function is as follows. Covalently attaches a chromophore to Cys residue(s) of phycobiliproteins. In Microcystis aeruginosa (strain NIES-843 / IAM M-2473), this protein is Chromophore lyase CpcT/CpeT 2.